Here is a 61-residue protein sequence, read N- to C-terminus: Large ribosomal subunit protein uL30 (61 aa).

This sequence belongs to the universal ribosomal protein uL30 family. In terms of assembly, part of the 50S ribosomal subunit.

This is Large ribosomal subunit protein uL30 from Bordetella parapertussis (strain 12822 / ATCC BAA-587 / NCTC 13253).